The sequence spans 232 residues: Ribosomal RNA small subunit methyltransferase G (232 aa).

S-adenosyl-L-methionine-binding positions include G93, L98, 144-145 (VE), and R163.

This sequence belongs to the methyltransferase superfamily. RNA methyltransferase RsmG family.

It is found in the cytoplasm. It carries out the reaction guanosine(527) in 16S rRNA + S-adenosyl-L-methionine = N(7)-methylguanosine(527) in 16S rRNA + S-adenosyl-L-homocysteine. Functionally, specifically methylates the N7 position of guanine in position 527 of 16S rRNA. This is Ribosomal RNA small subunit methyltransferase G from Burkholderia pseudomallei (strain 668).